Consider the following 20-residue polypeptide: Antifreeze protein (20 aa).

In terms of processing, N-glycosylated and O-glycosylated.

Its subcellular location is the secreted. It is found in the extracellular space. Antifreeze proteins bind to the surface of ice crystals and inhibit the growth of these crystals, this inhibition causes thermal hysteresis. Causes the shape of ice crystals to change from hexagonal to a bipyramidal shape with rugged facets. Inhibits recrystallization of ice crystals. In Antarctomyces psychrotrophicus, this protein is Antifreeze protein.